The following is a 104-amino-acid chain: Small ribosomal subunit protein uS10 (104 aa).

Belongs to the universal ribosomal protein uS10 family. As to quaternary structure, part of the 30S ribosomal subunit.

Its function is as follows. Involved in the binding of tRNA to the ribosomes. This is Small ribosomal subunit protein uS10 from Thermosynechococcus vestitus (strain NIES-2133 / IAM M-273 / BP-1).